The following is an 89-amino-acid chain: DNA/RNA-binding protein Alba (89 aa).

The protein belongs to the histone-like Alba family.

Its subcellular location is the cytoplasm. The protein localises to the chromosome. Binds double-stranded DNA tightly but without sequence specificity. Involved in DNA compaction. The chain is DNA/RNA-binding protein Alba from Methanococcus maripaludis (strain DSM 14266 / JCM 13030 / NBRC 101832 / S2 / LL).